Consider the following 151-residue polypeptide: 3-dehydroquinate dehydratase (151 aa).

Tyr26 (proton acceptor) is an active-site residue. Residues Asn77, His83, and Asp90 each coordinate substrate. His103 (proton donor) is an active-site residue. Substrate is bound by residues 104–105 (LS) and Arg114.

The protein belongs to the type-II 3-dehydroquinase family. As to quaternary structure, homododecamer.

It catalyses the reaction 3-dehydroquinate = 3-dehydroshikimate + H2O. The protein operates within metabolic intermediate biosynthesis; chorismate biosynthesis; chorismate from D-erythrose 4-phosphate and phosphoenolpyruvate: step 3/7. Catalyzes a trans-dehydration via an enolate intermediate. This chain is 3-dehydroquinate dehydratase, found in Pelodictyon phaeoclathratiforme (strain DSM 5477 / BU-1).